A 305-amino-acid chain; its full sequence is Glycine--tRNA ligase alpha subunit (305 aa).

It belongs to the class-II aminoacyl-tRNA synthetase family. Tetramer of two alpha and two beta subunits.

It localises to the cytoplasm. It carries out the reaction tRNA(Gly) + glycine + ATP = glycyl-tRNA(Gly) + AMP + diphosphate. This Vibrio cholerae serotype O1 (strain ATCC 39315 / El Tor Inaba N16961) protein is Glycine--tRNA ligase alpha subunit (glyQ).